Consider the following 427-residue polypeptide: Adenylosuccinate synthetase (427 aa).

GTP contacts are provided by residues 12–18 (GDEGKGK) and 40–42 (GHT). Catalysis depends on D13, which acts as the Proton acceptor. 2 residues coordinate Mg(2+): D13 and G40. IMP contacts are provided by residues 13–16 (DEGK), 38–41 (NAGH), T128, R142, Q223, T238, and R302. Catalysis depends on H41, which acts as the Proton donor. 298–304 (TTTGRPR) is a binding site for substrate. GTP contacts are provided by residues R304, 330–332 (KLD), and 412–414 (AVG).

It belongs to the adenylosuccinate synthetase family. In terms of assembly, homodimer. Mg(2+) is required as a cofactor.

The protein localises to the cytoplasm. It carries out the reaction IMP + L-aspartate + GTP = N(6)-(1,2-dicarboxyethyl)-AMP + GDP + phosphate + 2 H(+). Its pathway is purine metabolism; AMP biosynthesis via de novo pathway; AMP from IMP: step 1/2. Its function is as follows. Plays an important role in the de novo pathway of purine nucleotide biosynthesis. Catalyzes the first committed step in the biosynthesis of AMP from IMP. The chain is Adenylosuccinate synthetase from Moorella thermoacetica (strain ATCC 39073 / JCM 9320).